A 359-amino-acid polypeptide reads, in one-letter code: UDP-3-O-acylglucosamine N-acyltransferase (359 aa).

H256 serves as the catalytic Proton acceptor.

This sequence belongs to the transferase hexapeptide repeat family. LpxD subfamily. In terms of assembly, homotrimer.

The catalysed reaction is a UDP-3-O-[(3R)-3-hydroxyacyl]-alpha-D-glucosamine + a (3R)-hydroxyacyl-[ACP] = a UDP-2-N,3-O-bis[(3R)-3-hydroxyacyl]-alpha-D-glucosamine + holo-[ACP] + H(+). It participates in bacterial outer membrane biogenesis; LPS lipid A biosynthesis. Its function is as follows. Catalyzes the N-acylation of UDP-3-O-acylglucosamine using 3-hydroxyacyl-ACP as the acyl donor. Is involved in the biosynthesis of lipid A, a phosphorylated glycolipid that anchors the lipopolysaccharide to the outer membrane of the cell. This is UDP-3-O-acylglucosamine N-acyltransferase from Rhodopseudomonas palustris (strain BisB5).